We begin with the raw amino-acid sequence, 253 residues long: CD151 antigen (253 aa).

At 1–18 (MGEFNEKKATCGTVCLKY) the chain is on the cytoplasmic side. 2 S-palmitoyl cysteine lipidation sites follow: cysteine 11 and cysteine 15. The chain crosses the membrane as a helical span at residues 19–39 (LLFTYNCCFWLAGLAVMAVGI). Over 40–57 (WTLALKSDYISLLASSTY) the chain is Extracellular. The helical transmembrane segment at 58–78 (LATAYILVVAGVVVMVTGVLG) threads the bilayer. Residues 79–91 (CCATFKERRNLLR) are Cytoplasmic-facing. The helical transmembrane segment at 92-112 (LYFILLLIIFLLEIIAGILAY) threads the bilayer. Over 113 to 221 (VYYQQLNTEL…LESFIQEHLR (109 aa)) the chain is Extracellular. The N-linked (GlcNAc...) asparagine glycan is linked to asparagine 159. A helical transmembrane segment spans residues 222–242 (VIGAVGIGIACVQVFGMIFTC). 2 S-palmitoyl cysteine lipidation sites follow: cysteine 242 and cysteine 243. Residues 243-253 (CLYRSLKLEHY) lie on the Cytoplasmic side of the membrane.

This sequence belongs to the tetraspanin (TM4SF) family. Interacts with integrins ITGA3:ITGB1, ITGA5:ITGB1, ITGA3:ITGB1 and ITGA6:ITGB4 and with CD9 and CD181. Interacts (via the second extracellular domain) with integrin ITGAV:ITGB3. Interacts with ITGA3; this interaction modulates ITGA3 glycosylation pattern. Interacts with F11R. Interacts with RAC1 and CDC42; these interactions mediate physical association of RAC1 and CDC42 with integrin adhesion receptor complexes. Palmitoylated. Palmitoylation by ZDHHC2 regulates CD151 expression, association with other tetraspanin family proteins and function in cell adhesion. In terms of processing, ubiquitinated by RNF128 on lysine residues present in the tetraspanin amino terminus via 'Lys-48'-linked ubiquitin leading to proteasomal degradation.

Its subcellular location is the cell membrane. Structural component of specialized membrane microdomains known as tetraspanin-enriched microdomains (TERMs), which act as platforms for receptor clustering and signaling. Plays a role in various cellular and molecular mechanism through its association with both integrin and non-integrin proteins. These interactions facilitate critical cellular functions, including cell-to-cell communication, wound healing, platelet aggregation, trafficking, cell motility, and angiogenesis. Via interaction with JAM-A/F11R and integrin ITGA3:ITGB1, promotes the recruitment of signaling molecules such as RAC1, CDC42 and RhoGTPases to facilitate the polarization of epithelial cells and the reorganization of the actin cytoskeleton, which are critical steps in cell migration process. Regulates the glycosylation pattern of ITGA3:ITGB1 thereby modulating its activity. Plays an essential role in the maintenance of central laminin-binding integrin ITGA6:ITGB4-containing adhesion complexes. Essential for the proper assembly of the glomerular and tubular basement membranes in kidney. Contributes to T-cell activation by modulating integrin signaling leading to activation of downstream targets PTK2 and MAPK1/MAPK3. The chain is CD151 antigen (Cd151) from Rattus norvegicus (Rat).